The primary structure comprises 255 residues: uncharacterized protein (255 aa).

Disordered regions lie at residues 112–145 (CWPGSPLGGTGPPTNRPPRSRAWNRYRSDRPSPG) and 157–183 (GLAEHQGGGDGDVERAHAGNHRNPDAQ).

This is an uncharacterized protein from Rhodospirillum rubrum.